We begin with the raw amino-acid sequence, 302 residues long: Large ribosomal subunit protein uL29m (302 aa).

It belongs to the universal ribosomal protein uL29 family. As to quaternary structure, component of the mitochondrial large ribosomal subunit. Mature mitochondrial ribosomes consist of a small (37S) and a large (54S) subunit. The 37S subunit contains at least 33 different proteins and 1 molecule of RNA (15S). The 54S subunit contains at least 45 different proteins and 1 molecule of RNA (21S).

The protein resides in the mitochondrion. This Debaryomyces hansenii (strain ATCC 36239 / CBS 767 / BCRC 21394 / JCM 1990 / NBRC 0083 / IGC 2968) (Yeast) protein is Large ribosomal subunit protein uL29m (MRPL4).